The chain runs to 77 residues: Putative neurotoxin 2 (77 aa).

The signal sequence occupies residues 1–25; the sequence is MKAFIVILSIAIVLLLIVSIKETSA. Positions 26 to 46 are excised as a propeptide; the sequence is KDCKQECVKRYTNGDFTNFFK.

The protein belongs to the scolopendra neurotoxin 3 family. Post-translationally, contains 2 disulfide bonds. Expressed by the venom gland.

The protein resides in the secreted. The chain is Putative neurotoxin 2 from Scolopendra mutilans (Chinese red-headed centipede).